Consider the following 660-residue polypeptide: Acetyl-coenzyme A synthetase (660 aa).

CoA is bound by residues 197 to 200 and threonine 317; that span reads RGGK. ATP-binding positions include 397 to 399, 421 to 426, aspartate 512, and arginine 528; these read GEP and DTFWQT. Serine 536 contacts CoA. Position 539 (arginine 539) interacts with ATP. 2 residues coordinate Mg(2+): valine 550 and valine 555. The residue at position 625 (lysine 625) is an N6-acetyllysine.

It belongs to the ATP-dependent AMP-binding enzyme family. It depends on Mg(2+) as a cofactor. In terms of processing, acetylated. Deacetylation by the SIR2-homolog deacetylase activates the enzyme.

The enzyme catalyses acetate + ATP + CoA = acetyl-CoA + AMP + diphosphate. Its pathway is ketone degradation; acetoin degradation. Its function is as follows. Catalyzes the conversion of acetate into acetyl-CoA (AcCoA), an essential intermediate at the junction of anabolic and catabolic pathways. AcsA undergoes a two-step reaction. In the first half reaction, AcsA combines acetate with ATP to form acetyl-adenylate (AcAMP) intermediate. In the second half reaction, it can then transfer the acetyl group from AcAMP to the sulfhydryl group of CoA, forming the product AcCoA. Although acetate is the preferred substrate of AcsA, propionate is also used, but at a diminished rate compared with that of acetate. Fatty acids with more than three carbon atoms are usually not accepted as substrates by AcsA. This chain is Acetyl-coenzyme A synthetase, found in Cupriavidus necator (strain ATCC 17699 / DSM 428 / KCTC 22496 / NCIMB 10442 / H16 / Stanier 337) (Ralstonia eutropha).